Here is a 334-residue protein sequence, read N- to C-terminus: tRNA N6-adenosine threonylcarbamoyltransferase (334 aa).

Residues H107 and H111 each coordinate Fe cation. Residues 129 to 133 (LVSGG), D162, G175, and N269 contribute to the substrate site. Residue D297 participates in Fe cation binding.

Belongs to the KAE1 / TsaD family. Fe(2+) serves as cofactor.

It is found in the cytoplasm. The catalysed reaction is L-threonylcarbamoyladenylate + adenosine(37) in tRNA = N(6)-L-threonylcarbamoyladenosine(37) in tRNA + AMP + H(+). Required for the formation of a threonylcarbamoyl group on adenosine at position 37 (t(6)A37) in tRNAs that read codons beginning with adenine. Is involved in the transfer of the threonylcarbamoyl moiety of threonylcarbamoyl-AMP (TC-AMP) to the N6 group of A37, together with TsaE and TsaB. TsaD likely plays a direct catalytic role in this reaction. This chain is tRNA N6-adenosine threonylcarbamoyltransferase, found in Campylobacter concisus (strain 13826).